A 978-amino-acid chain; its full sequence is MAIERQAVQGLRRVQSTGGPSAASFATRQVGVQETSASGSRFLEDLVNAAGSLATVTTSILNQRVEDDKVRQYNRALTGLMPTEDATVGGARAHMLVSLQNDIIAQTMQLSDDAQRFDGDDSQWEDHVINARMAVQDRLWDTYPELRGDKESMRVVTNAFMEQQPKIFAARETAKLKQEAEARIKSMESRILLATRDVPGEAMGDALNQLQKEAMAMQITKQEFDALVSQLAANRAAIGDDSMIQGTKSLKDENGVSLYDRVGQLQTGEIQANRTWAAQNQVALFEKKDAAIKAFEAGQLNREQLLQVMQNHNEISGGTAWSDSEIKSLFDRQAKARATSAKLEDLVARGEHGSPLGLQDISKEDRKAYAGALVDAYTKLANDEITRTGATGEEAEAIRGRYEQMRYAKLGQQLIEDPIIKERYGSLMQLSSANLKDMKIEPEALQTIMRARDSIPEDARRAVMGDKEYAFAENYDLATRMGYTPGQAIEFAQNASRGDKLPGSVMKELNDEVDGVVSDVASGSWLTRGDNMSDMGRDLMLEEANQIARSMKVAGHNNDTIKRHLKSFLQNQYTQLSEGFFTQGVLVKGDVRTLGDTIGANQKDVPTVLRQYLDNHKQALLDASGGMEEGDLYFDVDSKRGMFTIRAGSGRVPVTPAMPLSEIKGQDLLKEHYEKAVKERDEAKKNFEANQMRMWGAGGYQSPAPEKTTAKTVGSRGIADFLMSPAFASGENLPSNFEFNYKRNNMDFYNYVAKTENGANVGFDRVAGVYTPYKDAHGQSVGYGHFLTEEEKKNGYITIGEDKVPFAPGQSQLTPERAMRLLEQDMKSHVPSTKDWAVPFDAMHPGVQRGLMDLSYNLGKDGIKNAPKAYAAFKAGKFTDGFIEMLSTASTEGKRSSGLLVRRAEAYNLAQSGGSVPKISEVETREDGSMYVKFSGSMSEAFVSKSILGKIGKDGWMEVYPPKAGALASGTKVGRIKL.

The segment at 9–29 is disordered; it reads QGLRRVQSTGGPSAASFATRQ. Residues 14 to 29 are compositionally biased toward polar residues; sequence VQSTGGPSAASFATRQ.

The protein localises to the virion. Exolysin that catalyzes the cleavage of the host peptidoglycans during virus entry. The sequence is that of Peptidoglycan hydrolase gp36 from Salmonella typhimurium (Bacteriophage SP6).